A 75-amino-acid chain; its full sequence is Sec-independent protein translocase protein TatA (75 aa).

Residues 1–21 traverse the membrane as a helical segment; it reads MGSFSIWHWLIVLVIVALVFG. The disordered stretch occupies residues 44-75; the sequence is KDANSDKPAEQVTQQKVADDTIDVQAKEKTNS.

The protein belongs to the TatA/E family. As to quaternary structure, the Tat system comprises two distinct complexes: a TatABC complex, containing multiple copies of TatA, TatB and TatC subunits, and a separate TatA complex, containing only TatA subunits. Substrates initially bind to the TatABC complex, which probably triggers association of the separate TatA complex to form the active translocon.

The protein resides in the cell inner membrane. Part of the twin-arginine translocation (Tat) system that transports large folded proteins containing a characteristic twin-arginine motif in their signal peptide across membranes. TatA could form the protein-conducting channel of the Tat system. The polypeptide is Sec-independent protein translocase protein TatA (Bordetella petrii (strain ATCC BAA-461 / DSM 12804 / CCUG 43448)).